A 105-amino-acid chain; its full sequence is Large ribosomal subunit protein uL24 (105 aa).

This sequence belongs to the universal ribosomal protein uL24 family. In terms of assembly, part of the 50S ribosomal subunit.

One of two assembly initiator proteins, it binds directly to the 5'-end of the 23S rRNA, where it nucleates assembly of the 50S subunit. Functionally, one of the proteins that surrounds the polypeptide exit tunnel on the outside of the subunit. The chain is Large ribosomal subunit protein uL24 from Xylella fastidiosa (strain M12).